Reading from the N-terminus, the 468-residue chain is Transmembrane protein 151B (468 aa).

The segment at 1 to 25 (MPEDGGGDSGDVPEIIPDGEPLREE) is disordered. The next 2 membrane-spanning stretches (helical) occupy residues 45-65 (CLLL…CRLA) and 98-118 (YLYI…AECW). A disordered region spans residues 384-438 (VSSNSLPPARPSGPRLPFSRSRLSLGAGGRATPGVFRSLSGGPLGRRGEDTEPLE).

The protein belongs to the TMEM151 family.

It is found in the membrane. The protein is Transmembrane protein 151B (TMEM151B) of Bos taurus (Bovine).